A 434-amino-acid polypeptide reads, in one-letter code: Epimerase FSL3 (434 aa).

Residue 125 to 126 participates in substrate binding; sequence GF. Glu392 acts as the Proton acceptor in catalysis.

It belongs to the aldose epimerase family. In terms of assembly, monomer.

It participates in secondary metabolite biosynthesis. Its function is as follows. Epimerase; part of the gene cluster that mediates the biosynthesis of fusarielins F, G and H, decaketide compounds with 5 methylations and a decaline core that act as mycoestrogens as they stimulate growth of MCF-7 breast cancer cells. The initial compound in the pathway is produced by the reducing polyketide synthase FSL1. FSL1 lacks an active enoyl reductase (ER) domain and biosynthesis of fusarielins relies on the trans-acting enoyl reductase FSL5, before it is released through hydrolysis catalyzed by the thioesterase FSL2. Fusarielins F, G, and H have a C11=C12 cis double bond and is fully reduced between C10 and C11 and between C12 and C13. FSL3 can be involved in the formation of the C11=C12 cis double bond by moving a hypothetical C10=C11 or C12=C13 trans double bond to form prefusarielin. Prefusarielin is oxygenated at C15 and C16 by the cytochrome P450 monooxygenase FSL4, resulting in fusarielin F, which subsequently is epoxidized into fusarielin G by the same enzyme. The final step in the pathway is a reduction of the carboxylic acid moiety to yield fusarielin H via a still undetermined mechanism. This chain is Epimerase FSL3, found in Gibberella zeae (strain ATCC MYA-4620 / CBS 123657 / FGSC 9075 / NRRL 31084 / PH-1) (Wheat head blight fungus).